Reading from the N-terminus, the 389-residue chain is ATP-dependent (S)-NAD(P)H-hydrate dehydratase (389 aa).

Residues 53-389 (TLQLVRNIIP…RGGGRLPQAL (337 aa)) enclose the YjeF C-terminal domain. Phosphotyrosine is present on Tyr85. Residues Glu153 and 205-211 (NHMEFSR) contribute to the (6S)-NADPHX site. ATP contacts are provided by residues 245–249 (KGERD) and 264–273 (GSSRRCGGQG). Asp274 contacts (6S)-NADPHX. Disordered stretches follow at residues 316–350 (KTRAQGGCGPRTTAPTSPHLPLSPSPQVQPSPGGC) and 369–389 (RSLHHHLRHDRRGGGRLPQAL).

Belongs to the NnrD/CARKD family. Requires Mg(2+) as cofactor.

The protein localises to the mitochondrion. It catalyses the reaction (6S)-NADHX + ATP = ADP + phosphate + NADH + H(+). The catalysed reaction is (6S)-NADPHX + ATP = ADP + phosphate + NADPH + H(+). Its function is as follows. Catalyzes the dehydration of the S-form of NAD(P)HX at the expense of ATP, which is converted to ADP. Together with NAD(P)HX epimerase, which catalyzes the epimerization of the S- and R-forms, the enzyme allows the repair of both epimers of NAD(P)HX, a damaged form of NAD(P)H that is a result of enzymatic or heat-dependent hydration. The chain is ATP-dependent (S)-NAD(P)H-hydrate dehydratase from Macaca mulatta (Rhesus macaque).